The sequence spans 250 residues: Petrobactin import ATP-binding protein FatE (250 aa).

In terms of domain architecture, ABC transporter spans 2 to 236 (IKIDNVKKFY…TLLTDIFETR (235 aa)). 34–41 (GPNGAGKS) is a binding site for ATP.

This sequence belongs to the ABC transporter superfamily. As to quaternary structure, the complex is composed of two ATP-binding proteins (FatE), two transmembrane proteins (FatC and FatD) and a solute-binding protein (FpuA).

The protein resides in the cell membrane. It catalyses the reaction a Fe(III)-siderophore(out) + ATP + H2O = a Fe(III)-siderophore(in) + ADP + phosphate + H(+). Part of an ABC transporter complex involved in ferric-petrobactin uptake. Probably responsible for energy coupling to the transport system. This Bacillus anthracis protein is Petrobactin import ATP-binding protein FatE.